Reading from the N-terminus, the 227-residue chain is Cytidylate kinase (227 aa).

10–18 (GPASSGKST) lines the ATP pocket.

The protein belongs to the cytidylate kinase family. Type 1 subfamily.

Its subcellular location is the cytoplasm. The catalysed reaction is CMP + ATP = CDP + ADP. It carries out the reaction dCMP + ATP = dCDP + ADP. In Streptococcus mutans serotype c (strain ATCC 700610 / UA159), this protein is Cytidylate kinase.